Consider the following 157-residue polypeptide: uncharacterized protein (157 aa).

A compositionally biased stretch (basic and acidic residues) spans 1–11 (MGDLEGQDRPD). The tract at residues 1–22 (MGDLEGQDRPDPISTMVGPSGT) is disordered.

The protein resides in the mitochondrion. This is an uncharacterized protein from Arabidopsis thaliana (Mouse-ear cress).